A 79-amino-acid polypeptide reads, in one-letter code: MNCYLILTVALLLTSAMTGTTTAGQLNKKGVTLREDDRFPCNPGGCACRPLDSYSYTCQSPSSSTANCEGNECVSEADW.

An N-terminal signal peptide occupies residues 1-23 (MNCYLILTVALLLTSAMTGTTTA). A propeptide spanning residues 24–37 (GQLNKKGVTLREDD) is cleaved from the precursor. Cystine bridges form between Cys41–Cys58, Cys46–Cys68, and Cys48–Cys73.

In terms of tissue distribution, expressed by the venom duct.

Its subcellular location is the secreted. The protein is Conotoxin Cl9.4 of Californiconus californicus (California cone).